The following is a 70-amino-acid chain: Small ribosomal subunit protein bS21 (70 aa).

This sequence belongs to the bacterial ribosomal protein bS21 family.

The sequence is that of Small ribosomal subunit protein bS21 from Herminiimonas arsenicoxydans.